We begin with the raw amino-acid sequence, 556 residues long: 2-succinyl-5-enolpyruvyl-6-hydroxy-3-cyclohexene-1-carboxylate synthase (556 aa).

This sequence belongs to the TPP enzyme family. MenD subfamily. Homodimer. The cofactor is Mg(2+). It depends on Mn(2+) as a cofactor. Thiamine diphosphate is required as a cofactor.

The catalysed reaction is isochorismate + 2-oxoglutarate + H(+) = 5-enolpyruvoyl-6-hydroxy-2-succinyl-cyclohex-3-ene-1-carboxylate + CO2. It participates in quinol/quinone metabolism; 1,4-dihydroxy-2-naphthoate biosynthesis; 1,4-dihydroxy-2-naphthoate from chorismate: step 2/7. It functions in the pathway quinol/quinone metabolism; menaquinone biosynthesis. In terms of biological role, catalyzes the thiamine diphosphate-dependent decarboxylation of 2-oxoglutarate and the subsequent addition of the resulting succinic semialdehyde-thiamine pyrophosphate anion to isochorismate to yield 2-succinyl-5-enolpyruvyl-6-hydroxy-3-cyclohexene-1-carboxylate (SEPHCHC). The chain is 2-succinyl-5-enolpyruvyl-6-hydroxy-3-cyclohexene-1-carboxylate synthase from Salmonella dublin (strain CT_02021853).